We begin with the raw amino-acid sequence, 185 residues long: Probable chorismate pyruvate-lyase (185 aa).

Arg-80, Leu-118, and Glu-170 together coordinate substrate.

The protein belongs to the UbiC family.

The protein resides in the cytoplasm. The enzyme catalyses chorismate = 4-hydroxybenzoate + pyruvate. The protein operates within cofactor biosynthesis; ubiquinone biosynthesis. Removes the pyruvyl group from chorismate, with concomitant aromatization of the ring, to provide 4-hydroxybenzoate (4HB) for the ubiquinone pathway. The protein is Probable chorismate pyruvate-lyase of Pseudomonas putida (strain ATCC 47054 / DSM 6125 / CFBP 8728 / NCIMB 11950 / KT2440).